A 207-amino-acid chain; its full sequence is Arginine exporter protein ArgO (207 aa).

6 consecutive transmembrane segments (helical) span residues 1 to 21 (MLSTFVQGFFLSAAMILPLGP), 42 to 62 (LCAISDGFLIGVGVFGGSALL), 67 to 87 (LLLQFVTWGGVAFLFWYGWGA), 111 to 131 (VVAIIFAVTWLNPHVYLDTIV), 150 to 170 (FGAASASVSWFFSLSLLAAWF), and 185 to 205 (GFICIIMWYIAWQLAKQGLLI).

The protein belongs to the LysE/ArgO transporter (TC 2.A.75) family.

The protein localises to the cell inner membrane. The catalysed reaction is L-arginine(in) = L-arginine(out). Functionally, involved in the export of arginine. Important to control the intracellular level of arginine and the correct balance between arginine and lysine. The protein is Arginine exporter protein ArgO of Photorhabdus laumondii subsp. laumondii (strain DSM 15139 / CIP 105565 / TT01) (Photorhabdus luminescens subsp. laumondii).